Here is an 81-residue protein sequence, read N- to C-terminus: Putative membrane protein insertion efficiency factor (81 aa).

It belongs to the UPF0161 family.

The protein localises to the cell inner membrane. Functionally, could be involved in insertion of integral membrane proteins into the membrane. The protein is Putative membrane protein insertion efficiency factor of Pseudomonas syringae pv. syringae (strain B728a).